Reading from the N-terminus, the 404-residue chain is Cytochrome b561 and DOMON domain-containing protein At2g04850 (404 aa).

The first 22 residues, 1 to 22 (MATLILSFLLLLLATKLPESLA), serve as a signal peptide directing secretion. Positions 43 to 173 (QQASIAWTYH…TKIHHVWNRG (131 aa)) constitute a DOMON domain. One can recognise a Cytochrome b561 domain in the interval 180–380 (SPTIHPTTST…MEVNSWVVFC (201 aa)). The chain crosses the membrane as a helical span at residues 217 to 237 (VTHGVVNAISWGFLLPAGAVT). H219 and H255 together coordinate heme b. The chain crosses the membrane as a helical span at residues 256-276 (AAIQLTGFLLGTIGFSIGIVL). Residue H288 participates in heme b binding. A helical membrane pass occupies residues 290-310 (SLGIATFTAAALQTLALLFRP). Position 324 (H324) interacts with heme b. A run of 2 helical transmembrane segments spans residues 326-346 (FVGYACVVMGVVNVFQGFEVL) and 359-379 (LCLSTLVGVCVAMEVNSWVVF).

Heme b is required as a cofactor.

The protein localises to the membrane. Its function is as follows. May act as a catecholamine-responsive trans-membrane electron transporter. This is Cytochrome b561 and DOMON domain-containing protein At2g04850 from Arabidopsis thaliana (Mouse-ear cress).